The following is a 161-amino-acid chain: Photosystem I reaction center subunit XI (161 aa).

Transmembrane regions (helical) follow at residues 84-104 (LIST…YGLV) and 126-146 (FTGG…FLLE).

It belongs to the PsaL family.

The protein localises to the cellular thylakoid membrane. The protein is Photosystem I reaction center subunit XI of Trichodesmium erythraeum (strain IMS101).